We begin with the raw amino-acid sequence, 296 residues long: tRNA pseudouridine synthase B (296 aa).

Aspartate 38 serves as the catalytic Nucleophile.

Belongs to the pseudouridine synthase TruB family. Type 1 subfamily.

It carries out the reaction uridine(55) in tRNA = pseudouridine(55) in tRNA. Its function is as follows. Responsible for synthesis of pseudouridine from uracil-55 in the psi GC loop of transfer RNAs. The sequence is that of tRNA pseudouridine synthase B from Synechocystis sp. (strain ATCC 27184 / PCC 6803 / Kazusa).